Reading from the N-terminus, the 874-residue chain is Alanine--tRNA ligase (874 aa).

Zn(2+)-binding residues include histidine 562, histidine 566, cysteine 664, and histidine 668.

This sequence belongs to the class-II aminoacyl-tRNA synthetase family. Zn(2+) serves as cofactor.

The protein localises to the cytoplasm. It catalyses the reaction tRNA(Ala) + L-alanine + ATP = L-alanyl-tRNA(Ala) + AMP + diphosphate. Its function is as follows. Catalyzes the attachment of alanine to tRNA(Ala) in a two-step reaction: alanine is first activated by ATP to form Ala-AMP and then transferred to the acceptor end of tRNA(Ala). Also edits incorrectly charged Ser-tRNA(Ala) and Gly-tRNA(Ala) via its editing domain. This chain is Alanine--tRNA ligase, found in Shewanella baltica (strain OS155 / ATCC BAA-1091).